The primary structure comprises 242 residues: Large ribosomal subunit protein uL2 (242 aa).

The interval 201–242 is disordered; that stretch reads VDHPFGGGRHQHTGKPTTVSRKKVPPGRKVGHISARRTGVRK. Positions 220 to 242 are enriched in basic residues; it reads SRKKVPPGRKVGHISARRTGVRK.

It belongs to the universal ribosomal protein uL2 family. In terms of assembly, part of the 50S ribosomal subunit. Forms a bridge to the 30S subunit in the 70S ribosome.

In terms of biological role, one of the primary rRNA binding proteins. Required for association of the 30S and 50S subunits to form the 70S ribosome, for tRNA binding and peptide bond formation. It has been suggested to have peptidyltransferase activity; this is somewhat controversial. Makes several contacts with the 16S rRNA in the 70S ribosome. The sequence is that of Large ribosomal subunit protein uL2 from Methanocaldococcus jannaschii (strain ATCC 43067 / DSM 2661 / JAL-1 / JCM 10045 / NBRC 100440) (Methanococcus jannaschii).